We begin with the raw amino-acid sequence, 363 residues long: MSNKKIIFFTGGGTGGHIFPGISIIQKLKELDNEIEFFWIGKKNSIEEKLIKEQNNIKFISIPCGKLRRYFSFQNFTDFFKVIFGIIKSFYILKKYKPQIVYATGGFVSTPTIIASSLLKIKRITHEMDLDPGLATKINSKFANKIYISFKESEKYFKNHKNIIHTGSPIRKEFLTPNPKIIKQLTQNTNKPIVSILGGSLGANALNNLALCIKKDAEIYFIHQSGKNLNDLREDNYIRRQFFNAEEMASIVKFSNIIISRAGAGAIKEFANACTCTILIPFKKGSRGDQIKNAKLLKTQNACIYIDEDEILNANILKIIKETLKDKEKINTLKANIKKFNNKNSSALIAQLLIKDIKETKSK.

UDP-N-acetyl-alpha-D-glucosamine contacts are provided by residues 14-16 (TGG), Arg-171, Ser-200, and Gln-290.

It belongs to the glycosyltransferase 28 family. MurG subfamily.

Its subcellular location is the cell inner membrane. It carries out the reaction di-trans,octa-cis-undecaprenyl diphospho-N-acetyl-alpha-D-muramoyl-L-alanyl-D-glutamyl-meso-2,6-diaminopimeloyl-D-alanyl-D-alanine + UDP-N-acetyl-alpha-D-glucosamine = di-trans,octa-cis-undecaprenyl diphospho-[N-acetyl-alpha-D-glucosaminyl-(1-&gt;4)]-N-acetyl-alpha-D-muramoyl-L-alanyl-D-glutamyl-meso-2,6-diaminopimeloyl-D-alanyl-D-alanine + UDP + H(+). Its pathway is cell wall biogenesis; peptidoglycan biosynthesis. Its function is as follows. Cell wall formation. Catalyzes the transfer of a GlcNAc subunit on undecaprenyl-pyrophosphoryl-MurNAc-pentapeptide (lipid intermediate I) to form undecaprenyl-pyrophosphoryl-MurNAc-(pentapeptide)GlcNAc (lipid intermediate II). This is UDP-N-acetylglucosamine--N-acetylmuramyl-(pentapeptide) pyrophosphoryl-undecaprenol N-acetylglucosamine transferase from Borreliella afzelii (strain PKo) (Borrelia afzelii).